The sequence spans 859 residues: Protein translocase subunit SecA (859 aa).

ATP contacts are provided by residues Gln-88, Gly-106–Thr-110, and Asp-496. The disordered stretch occupies residues Phe-818–Ser-838. Zn(2+) contacts are provided by Cys-834, Cys-836, Cys-845, and Cys-846.

The protein belongs to the SecA family. In terms of assembly, monomer and homodimer. Part of the essential Sec protein translocation apparatus which comprises SecA, SecYEG and auxiliary proteins SecDF-YajC and YidC. Zn(2+) is required as a cofactor.

The protein localises to the cell inner membrane. Its subcellular location is the cytoplasm. It carries out the reaction ATP + H2O + cellular proteinSide 1 = ADP + phosphate + cellular proteinSide 2.. In terms of biological role, part of the Sec protein translocase complex. Interacts with the SecYEG preprotein conducting channel. Has a central role in coupling the hydrolysis of ATP to the transfer of proteins into and across the cell membrane, serving as an ATP-driven molecular motor driving the stepwise translocation of polypeptide chains across the membrane. The polypeptide is Protein translocase subunit SecA (Wolinella succinogenes (strain ATCC 29543 / DSM 1740 / CCUG 13145 / JCM 31913 / LMG 7466 / NCTC 11488 / FDC 602W) (Vibrio succinogenes)).